The chain runs to 1231 residues: uncharacterized protein (1231 aa).

Disordered regions lie at residues 171-197, 210-259, and 389-547; these read LKPDESIKSSMKKNVDGTGDSNKQHDD, DESF…HLPT, and ASPR…RSSR. The segment covering 440-450 has biased composition (basic residues); that stretch reads RSRHSHKRRSI. Phosphoserine is present on residues serine 449, serine 451, serine 453, and serine 455. The segment covering 458–502 has biased composition (basic residues); it reads RGGRRAVRRSRSRSPRRSYNRGSTRSRSRSMRHRSRSPAHYRGRG. A compositionally biased stretch (basic and acidic residues) spans 503–541; the sequence is RGREPASKERGSSSRDFGGRHSLQRERERSSEYYHRNEG. Phosphotyrosine is present on tyrosine 549. Disordered regions lie at residues 570–591, 950–981, and 1058–1203; these read KTSSISPTASSNKEKEKEASEP, PNLDRDMSSMPINKQRRGRNTPSIMLDDDDEE, and TLSK…PPFN. Serine 573 and serine 589 each carry phosphoserine. Phosphothreonine is present on threonine 970. A Phosphoserine modification is found at serine 972. Polar residues predominate over residues 1076–1103; it reads YMMNQQHGAPNAQNAPNLGQNPGQNLGQ. Residues 1118-1127 are compositionally biased toward low complexity; the sequence is QQQQQQQQQQ. The segment covering 1178–1203 has biased composition (pro residues); it reads PPGPGGYVGPPPNPWASNVPPQPPFN.

This is an uncharacterized protein from Drosophila melanogaster (Fruit fly).